The sequence spans 178 residues: Translation initiation factor IF-3 (178 aa).

It belongs to the IF-3 family. As to quaternary structure, monomer.

It localises to the cytoplasm. Its function is as follows. IF-3 binds to the 30S ribosomal subunit and shifts the equilibrium between 70S ribosomes and their 50S and 30S subunits in favor of the free subunits, thus enhancing the availability of 30S subunits on which protein synthesis initiation begins. The protein is Translation initiation factor IF-3 of Ralstonia nicotianae (strain ATCC BAA-1114 / GMI1000) (Ralstonia solanacearum).